We begin with the raw amino-acid sequence, 260 residues long: Triosephosphate isomerase (260 aa).

A substrate-binding site is contributed by N11–K13. The Electrophile role is filled by H103. E175 (proton acceptor) is an active-site residue. Substrate-binding positions include G181, S220, and G241 to G242.

Belongs to the triosephosphate isomerase family. In terms of assembly, homodimer.

The protein localises to the cytoplasm. It catalyses the reaction D-glyceraldehyde 3-phosphate = dihydroxyacetone phosphate. It participates in carbohydrate biosynthesis; gluconeogenesis. It functions in the pathway carbohydrate degradation; glycolysis; D-glyceraldehyde 3-phosphate from glycerone phosphate: step 1/1. In terms of biological role, involved in the gluconeogenesis. Catalyzes stereospecifically the conversion of dihydroxyacetone phosphate (DHAP) to D-glyceraldehyde-3-phosphate (G3P). This is Triosephosphate isomerase from Shewanella piezotolerans (strain WP3 / JCM 13877).